Here is a 62-residue protein sequence, read N- to C-terminus: MDEKLSRVDPKLLDLLVCPLSKGRLSYDREHNELVSEKARLAYPIRDGIPIMLVSEARRLDE.

Belongs to the UPF0434 family.

In Rhizobium leguminosarum bv. trifolii (strain WSM2304), this protein is UPF0434 protein Rleg2_3773.